The primary structure comprises 330 residues: WRKY transcription factor WRKY51 (330 aa).

Residues 39–61 form a disordered region; that stretch reads QTGTSERSPAPAPAQEQQQQQQV. Positions 51 to 60 are enriched in low complexity; it reads PAQEQQQQQQ. Positions 74–81 match the Nuclear localization signal motif; the sequence is FKKVISML. Disordered regions lie at residues 91–117 and 302–330; these read RGPV…SAVS and YEGE…LPLA. Positions 101-117 are enriched in low complexity; that stretch reads PAASEPAPVRSSPSAVS. The segment at residues 245-311 is a DNA-binding region (WRKY); that stretch reads KVADIPADDF…YEGEHRHTPS (67 aa). The span at 318–330 shows a compositional bias: pro residues; the sequence is PPAPPPPLALPLA.

This sequence belongs to the WRKY group II-a family. As to expression, highly expressed in aleurone cells. In seeds, predominantly present in the plumule, radicle and scutellum of the embryo.

It is found in the nucleus. Its function is as follows. Transcription factor. Interacts, when in complex with WRKY71, specifically with the W box (5'-(T)TGAC[CT]-3'), a frequently occurring elicitor-responsive cis-acting element. Represses specifically gibberellic acid (GA)-induced promoters in aleurone cells, probably by interfering with GAM1. This Oryza sativa subsp. indica (Rice) protein is WRKY transcription factor WRKY51.